The chain runs to 238 residues: Endothelial protein C receptor (238 aa).

The N-terminal stretch at 1-17 (MLTTLLPILLLSGWAFC) is a signal peptide. Over 18-210 (SQDASDGLQR…GSQTSRSYTS (193 aa)) the chain is Extracellular. N-linked (GlcNAc...) asparagine glycans are attached at residues Asn47, Asn64, Asn136, and Asn172. Residues Cys118 and Cys186 are joined by a disulfide bond. The chain crosses the membrane as a helical span at residues 211-231 (LVLGVLVGSFIIAGVAVGIFL). Over 232–238 (CTGGRRC) the chain is Cytoplasmic.

Post-translationally, N-glycosylated. In terms of processing, a soluble form exists; probably released by a metalloprotease. Seems to have the same activity as the membrane-bound form. As to expression, expressed strongly in the endothelial cells of arteries and veins in heart and lung, less intensely in capillaries in the lung and skin, and not at all in the endothelium of small vessels of the liver and kidney.

It localises to the membrane. Its function is as follows. Binds activated protein C. Enhances protein C activation by the thrombin-thrombomodulin complex; plays a role in the protein C pathway controlling blood coagulation. The chain is Endothelial protein C receptor (PROCR) from Homo sapiens (Human).